Reading from the N-terminus, the 207-residue chain is M-zodatoxin-Lt4a (207 aa).

Residues 1-22 (MKFSIIALALAVAFVCVAESRS) form the signal peptide. Positions 23–43 (EEEGYDVSEEIQAEELEEAER) are excised as a propeptide. A Processing quadruplet motif 1 motif is present at residues 40 to 43 (EAER). Gln61 carries the glutamine amide modification. Positions 63–66 (REDS) match the Inverted processing quadruplet motif 1 motif. Residues 63–71 (REDSEEAGR) constitute a propeptide that is removed on maturation. The Processing quadruplet motif 2 signature appears at 68 to 71 (EAGR). Residue Gln89 is modified to Glutamine amide. An Inverted processing quadruplet motif 2 motif is present at residues 91–94 (REDS). Residues 91-99 (REDSEEAGR) constitute a propeptide that is removed on maturation. The short motif at 96–99 (EAGR) is the Processing quadruplet motif 3 element. At Gln117 the chain carries Glutamine amide. The Inverted processing quadruplet motif 3 signature appears at 119 to 122 (REDS). Residues 119 to 127 (REDSEEAGR) constitute a propeptide that is removed on maturation. Residues 124 to 127 (EAGR) carry the Processing quadruplet motif 4 motif. Gln145 is subject to Glutamine amide. Positions 147 to 150 (REDS) match the Inverted processing quadruplet motif 4 motif. A propeptide spanning residues 147–155 (REDSEEAGR) is cleaved from the precursor. The short motif at 152-155 (EAGR) is the Processing quadruplet motif 5 element. Gln173 is modified (glutamine amide). Positions 175–178 (REDT) match the Inverted processing quadruplet motif 5 motif. The propeptide occupies 175-182 (REDTEEAR). Positions 179-182 (EEAR) match the Processing quadruplet motif 6 motif. Residue Phe206 is modified to Phenylalanine amide.

Belongs to the cationic peptide 03 (latarcin) family. 04 subfamily. Post-translationally, cleavage of the propeptide depends on the processing quadruplet motif (PQM) (XXXR, with at least one of X being E) and the inverted PQM (RXXX, with at least one of X being E). In terms of tissue distribution, expressed by the venom gland.

It is found in the secreted. In terms of biological role, M-zodatoxin-Lt4a: Has antimicrobial activity against Gram-positive bacteria (A.globiformis VKM Ac-1112 (MIC=0.3 uM), and B.subtilis VKM B-501 (MIC=1.1 uM)), Gram-negative bacteria (E.coli DH5-alpha (MIC=4.5 uM), E.coli MH1 (MIC=3.2 uM), and P.aeruginosa PAO1 (MIC&gt;35 uM)), and yeasts (P.pastoris GS115 (MIC=36 uM), and S.cerevisiae Y190 (MIC=18 uM)). Does not have hemolytic activity against rabbit erythrocytes. Causes paralysis, but is not lethal when injected into insect (M.domestica) larvae. Its function is as follows. Shows no antimicrobial activity against Gram-positive bacterium B.subtilis B-501 or Gram-negative bacterium E.coli DH5-alpha at concentrations up to 20 uM. Functionally, shows no antimicrobial activity against Gram-positive bacterium B.subtilis B-501 or Gram-negative bacterium E.coli DH5-alpha at concentrations up to 20 uM. Shows no toxicity towards insect (S.carnaria) larvae. This chain is M-zodatoxin-Lt4a, found in Lachesana tarabaevi (Spider).